The sequence spans 619 residues: Replication restart protein PriA (619 aa).

The Helicase ATP-binding domain maps to 119–285 (LKELQKHPAS…KDKALVRLKG (167 aa)). 132–139 (GDTGSGKT) contacts ATP. The DEAH box motif lies at 228–231 (DEEH). Zn(2+) is bound by residues C336, C339, C345, C348, C363, C366, C376, and C379. The Helicase C-terminal domain occupies 371 to 532 (PIPKICNACQ…ELYPPFSRLC (162 aa)).

It belongs to the helicase family. PriA subfamily. Component of the replication restart primosome. It depends on Zn(2+) as a cofactor.

The catalysed reaction is Couples ATP hydrolysis with the unwinding of duplex DNA by translocating in the 3'-5' direction.. It catalyses the reaction ATP + H2O = ADP + phosphate + H(+). Initiates the restart of stalled replication forks, which reloads the replicative helicase on sites other than the origin of replication. Recognizes and binds to abandoned replication forks and remodels them to uncover a helicase loading site. Promotes assembly of the primosome at these replication forks. The protein is Replication restart protein PriA of Helicobacter pylori (strain J99 / ATCC 700824) (Campylobacter pylori J99).